We begin with the raw amino-acid sequence, 152 residues long: Regulatory protein RecX (152 aa).

It belongs to the RecX family.

The protein resides in the cytoplasm. Its function is as follows. Modulates RecA activity. This Haemophilus influenzae (strain PittEE) protein is Regulatory protein RecX.